We begin with the raw amino-acid sequence, 324 residues long: tRNA pseudouridine synthase B (324 aa).

The Nucleophile role is filled by Asp49. The interval 87–107 is disordered; it reads RSTDDLEGQPTKTSDKRPSRE.

The protein belongs to the pseudouridine synthase TruB family. Type 1 subfamily.

It carries out the reaction uridine(55) in tRNA = pseudouridine(55) in tRNA. Functionally, responsible for synthesis of pseudouridine from uracil-55 in the psi GC loop of transfer RNAs. The polypeptide is tRNA pseudouridine synthase B (Brucella canis (strain ATCC 23365 / NCTC 10854 / RM-666)).